We begin with the raw amino-acid sequence, 381 residues long: E3 ubiquitin-protein ligase Fancl (381 aa).

The segment at 110 to 293 (NIYYDILALY…MFDLCYFPMP (184 aa)) is UBC-RWD region (URD). The RING-CH-type; degenerate zinc-finger motif lies at 303 to 374 (EEDNEELRCN…PFCKAKLSTS (72 aa)). Positions 311, 314, 329, 334, 339, 342, 364, and 367 each coordinate Zn(2+).

In terms of assembly, interacts (via C-terminus) with FANCI and Fancd2.

It is found in the nucleus. It carries out the reaction S-ubiquitinyl-[E2 ubiquitin-conjugating enzyme]-L-cysteine + [acceptor protein]-L-lysine = [E2 ubiquitin-conjugating enzyme]-L-cysteine + N(6)-ubiquitinyl-[acceptor protein]-L-lysine.. It participates in protein modification; protein ubiquitination. In terms of biological role, ubiquitin ligase protein that mediates monoubiquitination of Fancd2. Ubiquitination of Fancd2 is stimulated by ionising radiation. Together with Fancd2, and probably FANCI, involved in DNA repair of damage caused by agents that induce interstrand cross-links but not agents that cause double strand breaks. The chain is E3 ubiquitin-protein ligase Fancl from Drosophila melanogaster (Fruit fly).